Consider the following 944-residue polypeptide: Trehalose monomycolate exporter MmpL3 (944 aa).

The Cytoplasmic portion of the chain corresponds to 1 to 13 (MFAWWGRTVYRYR). Residues 14–34 (FIVIGVMVALCLGGGVFGLSL) form a helical membrane-spanning segment. The Periplasmic segment spans residues 35-185 (GKHVTQSGFY…TIATDQRRME (151 aa)). 40 to 44 (QSGFY) contributes to the a 1,2-diacylglycero-3-phosphoethanolamine binding site. The chain crosses the membrane as a helical span at residues 186-206 (VLALPLVAVVLFFVFGGVIAA). Over 207 to 209 (GLP) the chain is Cytoplasmic. A helical transmembrane segment spans residues 210–230 (VMVGGLCIAGALGIMRFLAIF). Residues 231 to 235 (GPVHY) lie on the Periplasmic side of the membrane. The chain crosses the membrane as a helical span at residues 236–256 (FAQPVVSLIGLGIAIDYGLFI). Over 257–286 (VSRFREEIAEGYDTETAVRRTVITAGRTVT) the chain is Cytoplasmic. A helical membrane pass occupies residues 287–307 (FSAVLIVASAIGLLLFPQGFL). Topologically, residues 308-314 (KSLTYAT) are periplasmic. The chain crosses the membrane as a helical span at residues 315-335 (IASVMLSAILSITVLPACLGI). Topologically, residues 336–396 (LGKHVDALGV…KLVNRVMKRP (61 aa)) are cytoplasmic. The chain crosses the membrane as a helical span at residues 397-417 (VLFAAPIVIIMILLIIPVGKL). Residues 418 to 562 (SLGGISEKYL…HGLFAKMPLM (145 aa)) are Periplasmic-facing. A helical transmembrane segment spans residues 563 to 583 (VVILLTTTIVLMFLAFGSVVL). Residues 584–586 (PIK) are Cytoplasmic-facing. The chain crosses the membrane as a helical span at residues 587-607 (ATLMSALTLGSTMGILTWIFV). The Periplasmic segment spans residues 608–616 (DGHFSKWLN). A helical transmembrane segment spans residues 617–637 (FTPTPLTAPVIGLIIALVFGL). At 638–672 (STDYEVFLVSRMVEARERGMSTQEAIRIGTAATGR) the chain is on the cytoplasmic side. A helical transmembrane segment spans residues 673–693 (IITAAALIVAVVAGAFVFSDL). At 694 to 698 (VMMKY) the chain is on the periplasmic side. Residues 699 to 719 (LAFGLMAALLLDATVVRMFLV) traverse the membrane as a helical segment. The Cytoplasmic portion of the chain corresponds to 720-944 (PSVMKLLGDD…QDLLRREGRL (225 aa)). The segment at 778-944 (AAGDPRPPHD…QDLLRREGRL (167 aa)) is disordered. Residues 791-828 (PLAESPRPARSSPASSPELTPALEATAAPAAPSGASTT) are compositionally biased toward low complexity. Residues 829–839 (RMQIGSSTEPP) show a composition bias toward polar residues. Residues 855–866 (STPPPTPTPPSA) show a composition bias toward pro residues.

This sequence belongs to the resistance-nodulation-cell division (RND) (TC 2.A.6) family. MmpL subfamily. As to quaternary structure, monomer. Interacts with TtfA (via N-terminus); active trehalose monomycolate (TMM) biosynthesis is not required for the complex formation.

It is found in the cell inner membrane. The protein resides in the cell septum. It localises to the cell tip. Functionally, transports trehalose monomycolate (TMM) to the cell wall. Flips TMM across the inner membrane. Membrane potential is not required for this function. Transports probably phosphatidylethanolamine (PE) as well. Binds specifically both TMM and PE, but not trehalose dimycolate (TDM). Also binds diacylglycerol (DAG) and other phospholipids, including phosphatidylglycerol (PG), phosphatidylinositol (PI), and cardiolipin (CDL). Contributes to membrane potential, cell wall composition, antibiotic susceptibility and fitness. Could also be part of a heme-iron acquisition system. The polypeptide is Trehalose monomycolate exporter MmpL3 (mmpL3) (Mycobacterium tuberculosis (strain CDC 1551 / Oshkosh)).